The primary structure comprises 217 residues: Probable transaldolase (217 aa).

The active-site Schiff-base intermediate with substrate is the Lys-83.

The protein belongs to the transaldolase family. Type 3B subfamily.

The protein localises to the cytoplasm. It catalyses the reaction D-sedoheptulose 7-phosphate + D-glyceraldehyde 3-phosphate = D-erythrose 4-phosphate + beta-D-fructose 6-phosphate. It participates in carbohydrate degradation; pentose phosphate pathway; D-glyceraldehyde 3-phosphate and beta-D-fructose 6-phosphate from D-ribose 5-phosphate and D-xylulose 5-phosphate (non-oxidative stage): step 2/3. Transaldolase is important for the balance of metabolites in the pentose-phosphate pathway. The sequence is that of Probable transaldolase (tal) from Aquifex aeolicus (strain VF5).